Reading from the N-terminus, the 532-residue chain is Intercellular adhesion molecule 1 (532 aa).

Residues 1–27 (MAPSSPRPALPALLVLLGALFPGPGNA) form the signal peptide. At 28-480 (QTSVSPPKVI…TVNVLSPRYE (453 aa)) the chain is on the extracellular side. Ig-like C2-type domains follow at residues 41-103 (GGSV…QSTA) and 128-193 (GKDL…LDLR). Disulfide bonds link C48/C92, C52/C96, and C135/C186. Residue N145 is glycosylated (N-linked (GlcNAc...) asparagine). A Cell attachment site; atypical motif is present at residues 152–154 (RGE). N-linked (GlcNAc...) asparagine glycans are attached at residues N183, N202, N267, and N296. Ig-like C2-type domains are found at residues 230 to 297 (DTQG…LGNQ) and 325 to 378 (GTEV…LEVA). C237 and C290 are oxidised to a cystine. C332 and C371 are disulfide-bonded. N-linked (GlcNAc...) asparagine glycosylation is found at N385 and N406. 3 disulfide bridges follow: C403–C419, C419–C457, and C431–C457. In terms of domain architecture, Ig-like C2-type 5 spans 412–464 (NSQQTPMCQASGNPLPELKCLKDGTFPLPVGESVTVTRDLEGTYLCRARSTQG). The helical transmembrane segment at 481 to 503 (IVIITVVAAAVIMGTAGLSTYLY) threads the bilayer. Over 504-532 (NRQRKIRKYRLQQAQKGTPMKPNTQATPP) the chain is Cytoplasmic. T521 and T530 each carry phosphothreonine.

Belongs to the immunoglobulin superfamily. ICAM family. Homodimer. Interacts with MUC1 and promotes cell aggregation in epithelial cells. Interacts with ARHGEF26/SGEF. Interacts (on T cell side) with CD81, CD247 and CD9 at immunological synapses between antigen-presenting cells and T cells. Monoubiquitinated, which is promoted by MARCH9 and leads to endocytosis.

The protein localises to the membrane. In terms of biological role, ICAM proteins are ligands for the leukocyte adhesion protein LFA-1 (integrin alpha-L/beta-2). During leukocyte trans-endothelial migration, ICAM1 engagement promotes the assembly of endothelial apical cups through ARHGEF26/SGEF and RHOG activation. This is Intercellular adhesion molecule 1 (ICAM1) from Pan paniscus (Pygmy chimpanzee).